Reading from the N-terminus, the 122-residue chain is Ribosome-binding factor A (122 aa).

This sequence belongs to the RbfA family. In terms of assembly, monomer. Binds 30S ribosomal subunits, but not 50S ribosomal subunits or 70S ribosomes.

It is found in the cytoplasm. Functionally, one of several proteins that assist in the late maturation steps of the functional core of the 30S ribosomal subunit. Associates with free 30S ribosomal subunits (but not with 30S subunits that are part of 70S ribosomes or polysomes). Required for efficient processing of 16S rRNA. May interact with the 5'-terminal helix region of 16S rRNA. The sequence is that of Ribosome-binding factor A from Polaromonas naphthalenivorans (strain CJ2).